Consider the following 472-residue polypeptide: Siroheme synthase 2 (472 aa).

A precorrin-2 dehydrogenase /sirohydrochlorin ferrochelatase region spans residues 1-204 (MDYFPIFCQL…EDQVQVEQHV (204 aa)). Residues 22 to 23 (EV) and 43 to 44 (CE) contribute to the NAD(+) site. S128 is subject to Phosphoserine. Positions 216–472 (GEVVLVGAGP…GMKEQVERVG (257 aa)) are uroporphyrinogen-III C-methyltransferase. An S-adenosyl-L-methionine-binding site is contributed by P225. D248 (proton acceptor) is an active-site residue. K270 acts as the Proton donor in catalysis. S-adenosyl-L-methionine is bound by residues 301 to 303 (GGD), I306, 331 to 332 (TA), M382, and G411.

This sequence in the N-terminal section; belongs to the precorrin-2 dehydrogenase / sirohydrochlorin ferrochelatase family. It in the C-terminal section; belongs to the precorrin methyltransferase family.

It catalyses the reaction uroporphyrinogen III + 2 S-adenosyl-L-methionine = precorrin-2 + 2 S-adenosyl-L-homocysteine + H(+). It carries out the reaction precorrin-2 + NAD(+) = sirohydrochlorin + NADH + 2 H(+). The catalysed reaction is siroheme + 2 H(+) = sirohydrochlorin + Fe(2+). It functions in the pathway cofactor biosynthesis; adenosylcobalamin biosynthesis; precorrin-2 from uroporphyrinogen III: step 1/1. Its pathway is cofactor biosynthesis; adenosylcobalamin biosynthesis; sirohydrochlorin from precorrin-2: step 1/1. The protein operates within porphyrin-containing compound metabolism; siroheme biosynthesis; precorrin-2 from uroporphyrinogen III: step 1/1. It participates in porphyrin-containing compound metabolism; siroheme biosynthesis; siroheme from sirohydrochlorin: step 1/1. It functions in the pathway porphyrin-containing compound metabolism; siroheme biosynthesis; sirohydrochlorin from precorrin-2: step 1/1. In terms of biological role, multifunctional enzyme that catalyzes the SAM-dependent methylations of uroporphyrinogen III at position C-2 and C-7 to form precorrin-2 via precorrin-1. Then it catalyzes the NAD-dependent ring dehydrogenation of precorrin-2 to yield sirohydrochlorin. Finally, it catalyzes the ferrochelation of sirohydrochlorin to yield siroheme. The polypeptide is Siroheme synthase 2 (Yersinia enterocolitica serotype O:8 / biotype 1B (strain NCTC 13174 / 8081)).